The following is a 548-amino-acid chain: Glucose-6-phosphate isomerase (548 aa).

Glu359 (proton donor) is an active-site residue. Catalysis depends on residues His390 and Lys510.

It belongs to the GPI family.

The protein resides in the cytoplasm. The catalysed reaction is alpha-D-glucose 6-phosphate = beta-D-fructose 6-phosphate. Its pathway is carbohydrate biosynthesis; gluconeogenesis. It participates in carbohydrate degradation; glycolysis; D-glyceraldehyde 3-phosphate and glycerone phosphate from D-glucose: step 2/4. Its function is as follows. Catalyzes the reversible isomerization of glucose-6-phosphate to fructose-6-phosphate. This chain is Glucose-6-phosphate isomerase, found in Gloeobacter violaceus (strain ATCC 29082 / PCC 7421).